A 257-amino-acid polypeptide reads, in one-letter code: Aquaporin TIP4-2 (257 aa).

2 helical membrane-spanning segments follow: residues L32 to G52 and T63 to F83. The NPA 1 motif lies at N91 to A93. A run of 3 helical transmembrane segments spans residues L107–L127, G150–L170, and T178–F198. An NPA 2 motif is present at residues N204–A206. Residues W225 to V245 form a helical membrane-spanning segment.

It belongs to the MIP/aquaporin (TC 1.A.8) family. TIP (TC 1.A.8.10) subfamily.

The protein resides in the vacuole membrane. In terms of biological role, aquaporins facilitate the transport of water and small neutral solutes across cell membranes. The chain is Aquaporin TIP4-2 (TIP4-2) from Zea mays (Maize).